An 80-amino-acid chain; its full sequence is Dermaseptin-A5 (80 aa).

Positions 1-22 (MAFLKKSLFLVLFLGLVSLSIC) are cleaved as a signal peptide. Residues 23–43 (EEEKRENEDEEEQEDDEQSEM) constitute a propeptide that is removed on maturation. The disordered stretch occupies residues 24–45 (EEKRENEDEEEQEDDEQSEMKR). Over residues 30 to 40 (EDEEEQEDDEQ) the composition is skewed to acidic residues. Position 77 is a valine amide (Val77). Positions 79-80 (EQ) are excised as a propeptide.

This sequence belongs to the frog skin active peptide (FSAP) family. Dermaseptin subfamily. As to expression, expressed by the skin glands.

Its subcellular location is the secreted. Its function is as follows. Possesses a potent antimicrobial activity against Gram-positive and Gram-negative bacteria. Probably acts by disturbing membrane functions with its amphipathic structure. In Agalychnis annae (Blue-sided leaf frog), this protein is Dermaseptin-A5.